The following is a 306-amino-acid chain: Lipoyl synthase (306 aa).

7 residues coordinate [4Fe-4S] cluster: Cys-55, Cys-60, Cys-66, Cys-81, Cys-85, Cys-88, and Ser-294. Residues 67–283 (WNHRTATFLL…RSYALARGFT (217 aa)) form the Radical SAM core domain.

It belongs to the radical SAM superfamily. Lipoyl synthase family. [4Fe-4S] cluster serves as cofactor.

The protein localises to the cytoplasm. The enzyme catalyses [[Fe-S] cluster scaffold protein carrying a second [4Fe-4S](2+) cluster] + N(6)-octanoyl-L-lysyl-[protein] + 2 oxidized [2Fe-2S]-[ferredoxin] + 2 S-adenosyl-L-methionine + 4 H(+) = [[Fe-S] cluster scaffold protein] + N(6)-[(R)-dihydrolipoyl]-L-lysyl-[protein] + 4 Fe(3+) + 2 hydrogen sulfide + 2 5'-deoxyadenosine + 2 L-methionine + 2 reduced [2Fe-2S]-[ferredoxin]. It functions in the pathway protein modification; protein lipoylation via endogenous pathway; protein N(6)-(lipoyl)lysine from octanoyl-[acyl-carrier-protein]: step 2/2. Catalyzes the radical-mediated insertion of two sulfur atoms into the C-6 and C-8 positions of the octanoyl moiety bound to the lipoyl domains of lipoate-dependent enzymes, thereby converting the octanoylated domains into lipoylated derivatives. The chain is Lipoyl synthase from Chloroflexus aurantiacus (strain ATCC 29364 / DSM 637 / Y-400-fl).